A 475-amino-acid polypeptide reads, in one-letter code: Ankyrin repeat, SAM and basic leucine zipper domain-containing protein 1 (475 aa).

The interval 1–22 (MAAGALRGLPVAGGGESSESED) is disordered. Residues Ser-17, Ser-18, and Ser-20 each carry the phosphoserine modification. ANK repeat units follow at residues 45 to 74 (EKKE…SVDS), 78 to 107 (YGWT…NASF), 110 to 144 (DKQT…DPNV), 148 to 177 (RLMT…EVNT), 181 to 210 (NGYT…NKML), and 214 to 243 (DGKM…PLEG). The SAM domain occupies 272–334 (SYTAFGDLEV…KILATLKELQ (63 aa)).

In terms of assembly, interacts with DDX4, PIWIL1, RANBP9 and TDRD1.

The protein resides in the cytoplasm. Its function is as follows. Plays a central role during spermatogenesis by repressing transposable elements and preventing their mobilization, which is essential for the germline integrity. Acts via the piRNA metabolic process, which mediates the repression of transposable elements during meiosis by forming complexes composed of piRNAs and Piwi proteins and governs the methylation and subsequent repression of transposons. Its association with pi-bodies suggests a participation in the primary piRNAs metabolic process. Required prior to the pachytene stage to facilitate the production of multiple types of piRNAs, including those associated with repeats involved in the regulation of retrotransposons. May act by mediating protein-protein interactions during germ cell maturation. This Colobus guereza (Mantled guereza) protein is Ankyrin repeat, SAM and basic leucine zipper domain-containing protein 1 (ASZ1).